Consider the following 158-residue polypeptide: C-type lectin BML-1 (158 aa).

A signal peptide spans M1–C23. Cystine bridges form between C26–C37, C54–C154, C61–C156, and C129–C146. One can recognise a C-type lectin domain in the interval K33–Q155. The Ca(2+) site is built by Q119, D121, and E127. A Galactose-binding motif is present at residues Q119 to D121. An N-linked (GlcNAc...) asparagine glycan is attached at N134. Residues N142 and D143 each contribute to the Ca(2+) site.

Belongs to the true venom lectin family. Homodimer; non-covalently linked. As to expression, expressed by the venom gland.

The protein localises to the secreted. In terms of biological role, recombinant C-type lectin BML-1 is able to agglutinate erythrocytes. May be a calcium-dependent lectin. In Bungarus multicinctus (Many-banded krait), this protein is C-type lectin BML-1.